An 88-amino-acid polypeptide reads, in one-letter code: UPF0297 protein GK2555 (88 aa).

It belongs to the UPF0297 family.

The polypeptide is UPF0297 protein GK2555 (Geobacillus kaustophilus (strain HTA426)).